The primary structure comprises 249 residues: Low affinity immunoglobulin gamma Fc region receptor III-A (249 aa).

The signal sequence occupies residues 1–20; it reads MWQLLLPTALVLTAFSGIQA. The Extracellular segment spans residues 21–203; sequence GLQKAVVNLD…SPSMFPPWHQ (183 aa). 2 Ig-like C2-type domains span residues 22-102 and 119-188; these read LQKA…VQLE and EGDP…FRIS. 2 disulfides stabilise this stretch: cysteine 46/cysteine 88 and cysteine 127/cysteine 171. Asparagine 62, asparagine 164, and asparagine 179 each carry an N-linked (GlcNAc...) asparagine glycan. Residues 204–224 form a helical membrane-spanning segment; sequence ITFCLLIGLLFAIDTVLYFSV. Residues 225–249 are Cytoplasmic-facing; that stretch reads RRGLQSPVADYEEPKIQWSKEPQDK. Tyrosine 235 bears the Phosphotyrosine mark.

Forms a heterooligomeric complex with ITAM-containing signaling subunits FCER1G. Interacts (via transmembrane domain) with signaling subunits; this interaction is a prerequisite for receptor complex expression on the cell surface and intracellular signal transduction. Binds the Fc region of antigen-complexed IgG. N-glycosylated. Post-translationally, phosphorylated following receptor ligation. Detected on myeloid cells, peripheral blood monocytes, splenic and bone marrow dendritic cells, and thioglycollate-elicited macrophages and neutrophils but absent from lymphoid populations with no expression observed on T cells, B cells, NK cells or other granulocytes (at protein level). Expressed in peripheral blood leukocytes, spleen, liver, thymus and small intestine. Expressed in splenic dendritic cell subsets (at protein level).

It localises to the cell membrane. In terms of biological role, receptor for the invariable Fc fragment of immunoglobulin gamma (IgG). Binds with intermediate affinity to both IgG2a and IgG2b. Can bind to IgG2a and IgG2b monomers. Does not display binding to IgG1 or IgG3. Recognizes neutralizing virus-specific IgGs displayed on the cell surface of infected cells and triggers antibody-dependent cellular cytotoxicity (ADCC). Confers protection to lethal influenza virus infection. On splenic dendritic cells, uptakes antigen immune complexes and efficiently divert them into MHC class I and II antigen presentation pathways to provide for superior priming of CD4-positive and CD8-positive T cell immune responses. Mediates neutrophil activation by IgG complexes redundantly with FCGR2A. Plays a role in promoting bone resorption by enhancing osteoclast differentiation following binding to IgG2a. Also acts as a receptor for the Fc region of immunoglobulin epsilon (IgE). Binds with low affinity to both the a and b allotypes of IgE. Has also been shown to bind to IgE allotype a only but not to allotype b. Binds aggregated IgE but not the monomeric form and bound monomeric IgG is readily displaced by IgE complexes. Binding to IgE promotes macrophage-mediated phagocytosis, antigen presentation to T cells, production of pro-inflammatory cytokines and the late phase of cutaneous allergic reactions. Mediates enhanced ADCC in response to afucosylated IgGs. The polypeptide is Low affinity immunoglobulin gamma Fc region receptor III-A (Mus musculus (Mouse)).